A 302-amino-acid chain; its full sequence is Adipolin (302 aa).

A signal peptide spans methionine 1–leucine 20. Disordered stretches follow at residues glutamate 28 to phenylalanine 68 and alanine 86 to alanine 110. The N-linked (GlcNAc...) asparagine glycan is linked to asparagine 43. The span at alanine 86–aspartate 100 shows a compositional bias: basic and acidic residues. Residues leucine 147–threonine 302 form the C1q domain.

It belongs to the adipolin/erythroferrone family. As to quaternary structure, homomultimer; disulfide-linked. May interact with ERFE. Post-translationally, processed into Adipolin fC1QTNF12 and Adipolin gC1QTNF12 by FURIN. Insulin enhances endogenous C1QTNF12 cleavage. Predominantly expressed by adipose tissues.

It localises to the secreted. Insulin-sensitizing adipocyte-secreted protein (adipokine) that regulates glucose metabolism in liver and adipose tissue. Promotes glucose uptake in adipocytes and suppresses de novo glucose production in hepatocytes via the PI3K-Akt signaling pathway. Administration lead to reduction of blood glucose. Able to attenuate inflammation in fat tissue. This chain is Adipolin, found in Homo sapiens (Human).